Here is a 26-residue protein sequence, read N- to C-terminus: Glycyl-poneratoxin (26 aa).

Arginine 25 is subject to Arginine amide; in delta-paraponeritoxin-Pc1a.

In terms of processing, the glycine-PoTx is a non-amidated form of poneratoxin, with an extra-Gly at C-terminus. This loss of amidation does not alter toxin activity on Nav1.7/SCN9A. Expressed by the venom gland.

It is found in the secreted. Its function is as follows. Toxin that causes pain in vertebrates by targeting tetrodotoxin (TTX)-sensitive sodium channels in peripheral sensory neurons. Also blocks synaptic transmission and stimulates smooth muscle contraction. Converts the normally rapidly activating and inactivating sodium channel current into one that does not inactivate. Is active on both Nav1.6/SCN8A and Nav1.7/SCN9A sodium channels, with a much potent activity on Nav1.6/SCN8A (EC(50)=97 nM on human channels) than on Nav1.7/SCN9A (EC(50)=2.3 uM on human and EC(50)=1.8 uM on mouse channels). On these channels, causes a sustained current, a reduction in peak current amplitude and a hyperpolarising shift. Modulates Nav1.7/SCN9A in a non-competitive manner with TTX or tetracaine. Toxin-induced persistant current is very slowly reversible with repeated wash steps over 30 minutes. In vivo, shallow intraplantar injection in mice causes immediate, long-lasting and near-maximal nocifensive behaviors, which decrease with coinjection of TTX. When tested on insects, causes paralysis but not mortality at high doses. The polypeptide is Glycyl-poneratoxin (Paraponera clavata (Bullet ant)).